Here is a 3291-residue protein sequence, read N- to C-terminus: MQEELSVALSCPGMKSLGTLLPLLVLLGTTVPGIRGQAGSLDLQIDEEQPAGTLIGDISAGLPPGTAPPPMYFISAQEGSGVGTDLDIDEHSGVVCTARVLDRERRDRYRFTAVTPDGATVEVTVRVADINDHAPAFPQARAALQIPEHTALGTRYPLEPAHDADAGRLGTQGYALSGDGAGETFRLETRPGPGGAPVPELVIAGELDRENRSHYMLQLEAYDGGSPPRRAQALLDVTLLDINDHAPAFNQSRYHAVVSESLAPGSPVLQVFASDADAGANGAVTYEINRRQSEGDGPFSIDAHTGFLKLERPLDFEQRRVHELVVQARDGGAHPELGSAFVTVHVRDANDNQPSMTVIFLSADGSPRVSEAAPPGQLVARISVSDPDDGDFAHVNVSLEGGEGHFALSTQDSVIYLVCVARRLDREERDVYNLRVTATDSGSPPLRAEAAFVLHVTDVNDNAPAFDRQLYRPEPLPEVALPGSFVVRVTARDPDQGTNGQVTYSLAPGTHTHWFSIDPTSGIITTAATLDYELEPQPQLIVVATDGGLPPLVSSATVSVALQDVNDNEPQFQRTFYNASLPEGTQPGTCFLQVTATDADSGPFGLLSYSLGAGLGASGSPPFRIDAHSGEVCTTRILDRDQGPSSFDFTVTAIDGGGLKSMVYVKVFVADENDNPPQFYPREYAASLSAQSTPGTAVLRVHAHDPDQGPHGRLSYHILAGNSPPLFALDAHSGLLTVAWPLGRRANSVVQLEIGAQDGGGLQAEPIARVNISIVPGTPTPPIFEQLQYVFSVPEDVAPGTSVGVVQAHNPPGRLGPVTLTLSGGDPRGLFSLDSASGLLKTLRPLDRELLGPVLELEVRAGSGTPPVFSAARIRVLLDDVNDNSPAFPAPEDTVLLPQNTAPGTPVYTLRALDPDSGANSRVTFSLLAGGDGLFTVDPTTGHVRLMGPLGPPGGPPHELEVEAQDGGSPPRTSHFRLRVVIQDLGIHGLAPRFDSPTYRVDLPSGTTTGTQILQVQAQAPDGSPVTYHLAADGASNPFGLESQSGWLWVRAALDRESQELYTLKVMAVSGSKAELGQQTGTATVRVVILNQNDHSPRLSEEPTFLAVAENQPPGTSVGRVFATDKDSGPNGRLTYSLQQLSEDSKAFRIHPQTGEVTTLQTLDREQQSSFQLLVQVQDAGSPPRSATGTVHVAVLDLNDNSPTFLQASGAAGGGLPIQVPDRVPPGTLVTTLQAKDPDEGENGTILYTLTGSGSELFSLHPHTGELHTAASLIRAERPHYVLTLSAHDQGSPPRSASLQLLVQVLPSTRMVESPDLVEADSAATVPVVLTVTAAEGLRPGSLLGSVAPQEPASMGVLTYTLVGGADPEGTFALDSASGRLYLARVLDFESGPAWRALTVRAEGPGGAGARLMRVQVRVQDENEHAPAFARDPLALALPENPEPGATLYTFRASDADGPGPNSDVRYRLLRQEPPVPALRLDARTGALSAPRGLDRETTPALLLIVEATDRPANASRRKATRVSARVFVTDENDNAPVFASPSRMRLPEDQPPGPAALHVVARDPDLGEAARVSYRLAAGGDGHFRLHATTGALSVVRPLDREQRAEHVLTVVASDHGSPPRSSTQLLTVSVVDVNDEAPAFPQQEYNVILRENSPPGTSLLTLKATDPDLGANGQVTYGGVSGESFSLDPNSGVLTTLRALDREEQEEINLTVYARDRGLPPLLTHITVRVTVEDENDHSPTFGNTHLSLEVPEGQDPQTLTTLRASDPDGGLNGQLQYRILGGDPSGAFALDLTSGEFGTTRPLDREVEPAFQLQIEARDGGQPALSATLLVTVTVLDANDHAPAFPVPSYSVEVPEDAPVGTLLLQLQAHDPDEGDNGRVMYYLGAGTAGAFLLEPTSGELSTATALDREHCASYAFSVTAVDGAAAGPLSTTVPITVTVRDVNDHAPAFPTSPLRLRLPRPGPSLNKPTLALATLRAEDRDAGANASILYRLAGTPPPGTTVDSYTGEIRVARSPAALGPRDRVLFIVATDLGRPARSATGVVIVGIQGEPERGPRFPRANNEAVLRENAPPGTPVISPKAVHSGGSNGPITYSILSGNERGIFSIQPSTGTITVQSAEGLDFETNPRLRLVLQAESGGAFAFSVLTLTLQDANDNAPRFLQPHYVAFLPESRPLEGPLLQVEADDLDQGSGGQISYSLAASQPARGLFHVDPATGTITTTAILDREIWAETRLVLMATDRGSPALVGSATLTVMVIDTNDNRPTIPQPWELRVSEDALLGSEIAQVTGNDVDSGPVLWYVLSPSGPQDPFSIGRYGGRVSLTGPLDFEQCDHYHLQLLAHDGPHEGHANLTVLVEDVNDNVPIFSQSLYQVMMLEHTPPGSAILSVSATDRDSGANGHISYHLASPAEGFSVDTNNGTLFTTVGAMALGHEGPGVVDVVLEARDHGAPGRSAQATVHVQLKDQNDHAPSFTLPHYRVAVSEDLPPGSTLLTLEAIDADGSRSHATVDYSIISGNRGRVFQLEPRLAEVGDGVGPGPQALGCLVLLEPLDFESLTQYNLTVTAADRGQPPRSSAVPVTVTVLDVNDNPPVFTRASYRVTVPEDMPVGAELLHVEASDADPGPHGLVHFTLSSGDPLGLFELDENSGALRLAHPLDCETQAQHQLVVQAADPAGTHFALVPVTVEVQDVNDHGPAFPLSLLSTSLAENQPPGTLVTTLHAMDGDAGTFGRLRYTLLEAVPGPEGREAFSLNSSTGELRARVPFDYEHTGSFRLLVGAADAGNLSASVTVSVLITGEDEYDPVFLAPSFHFQVPEGAQRGHSLGHVQATDEDGGADGLVLYSLATSSPYFGINQTTGALYLRVDSRAPGSGTATSGGGGRTRREAPRELRLEVVARGPLPGSRSATVPVTVDITHTALGLAPDLNLLLVGAVAASLGVVVVLALAALVLGLVRARSRKAEAAPGPMSQTAPIASSSLQKLGREPPSPPPSEHLYHQTLPSYGGPGAGGPYPRGGSLDPSHSSGRGSAEAAEDDEIRMINEFPRVASVASSLAARGPDSGIQQDADGLSDTSCEPPAPDTWYKGRKAGLLLPGAGATLYREEGPPATATAFLGGCGLSPAPTGDYGFPADGKPCVAGALTAIVAGEEELRGSYNWDYLLSWCPQFQPLASVFTEIARLKDEARPCPPAPRIDPPPLITAVAHPGAKSVPPKPASTAATRAIFPPASHRSPISHEGSLSSAAMSPSFSPSLSPLAARSPVVSPFGVAQGPSASALSTESGLEPPDDTELRI.

A signal peptide spans 1–35 (MQEELSVALSCPGMKSLGTLLPLLVLLGTTVPGIR). Residues 36-2933 (GQAGSLDLQI…PDLNLLLVGA (2898 aa)) lie on the Extracellular side of the membrane. Cadherin domains lie at 37–137 (QAGS…APAF), 138–249 (PQAR…APAF), 250–356 (NQSR…QPSM), 369–466 (VSEA…APAF), 476–572 (LPEV…EPQF), 573–679 (QRTF…PPQF), 680–784 (YPRE…PPIF), 785–888 (EQLQ…SPAF), 889–994 (PAPE…APRF), 995–1105 (DSPT…EPTF), 1100–1205 (SEEP…SPTF), 1218–1317 (IQVP…SPDL), 1326–1429 (VPVV…APAF), 1430–1539 (ARDP…APVF), 1539–1642 (FASP…APAF), 1643–1744 (PQQE…SPTF), 1745–1848 (GNTH…APAF), 1849–1953 (PVPS…APAF), 1976–2061 (LATL…GPRF), 2062–2164 (PRAN…APRF), 2165–2270 (LQPH…RPTI), 2270–2369 (IPQP…VPIF), 2370–2475 (SQSL…APSF), 2476–2595 (TLPH…PPVF), 2596–2699 (TRAS…GPAF), 2700–2806 (PLSL…DPVF), and 2807–2926 (LAPS…APDL). N396 is a glycosylation site (N-linked (GlcNAc...) asparagine). A disordered region spans residues 951-971 (GPPGGPPHELEVEAQDGGSPP). N-linked (GlcNAc...) asparagine glycosylation occurs at N1711. Residue N2354 is glycosylated (N-linked (GlcNAc...) asparagine). N-linked (GlcNAc...) asparagine glycosylation occurs at N2562. The helical transmembrane segment at 2934-2954 (VAASLGVVVVLALAALVLGLV) threads the bilayer. Residues 2955–3291 (RARSRKAEAA…EPPDDTELRI (337 aa)) are Cytoplasmic-facing. The tract at residues 2978-3033 (SLQKLGREPPSPPPSEHLYHQTLPSYGGPGAGGPYPRGGSLDPSHSSGRGSAEAAE) is disordered. Over residues 3004–3013 (GGPGAGGPYP) the composition is skewed to gly residues. Residue S3048 is modified to Phosphoserine. 2 disordered regions span residues 3051–3080 (SSLA…PAPD) and 3226–3291 (ASHR…ELRI). Low complexity predominate over residues 3237–3259 (SLSSAAMSPSFSPSLSPLAARSP). The span at 3270 to 3279 (PSASALSTES) shows a compositional bias: polar residues.

Heterophilic interaction with FAT4; this interaction affects their respective protein levels.

It localises to the cell membrane. Calcium-dependent cell-adhesion protein. Mediates functions in neuroprogenitor cell proliferation and differentiation. This Rattus norvegicus (Rat) protein is Protocadherin-16 (Dchs1).